Consider the following 302-residue polypeptide: Elongation factor Ts (302 aa).

Residues 80 to 83 (TDFV) are involved in Mg(2+) ion dislocation from EF-Tu.

Belongs to the EF-Ts family.

It is found in the cytoplasm. Functionally, associates with the EF-Tu.GDP complex and induces the exchange of GDP to GTP. It remains bound to the aminoacyl-tRNA.EF-Tu.GTP complex up to the GTP hydrolysis stage on the ribosome. The sequence is that of Elongation factor Ts from Methylibium petroleiphilum (strain ATCC BAA-1232 / LMG 22953 / PM1).